Consider the following 761-residue polypeptide: Phosphoribosylformylglycinamidine synthase subunit PurL (761 aa).

H49 is an active-site residue. Positions 52 and 92 each coordinate ATP. A Mg(2+)-binding site is contributed by E94. Residues 95–98 (SHNH) and R117 contribute to the substrate site. The active-site Proton acceptor is the H96. A Mg(2+)-binding site is contributed by D118. Substrate is bound at residue Q241. D269 serves as a coordination point for Mg(2+). 318–320 (ESQ) lines the substrate pocket. ATP is bound by residues N502 and G539. N540 provides a ligand contact to Mg(2+). S542 contributes to the substrate binding site.

Belongs to the FGAMS family. Monomer. Part of the FGAM synthase complex composed of 1 PurL, 1 PurQ and 2 PurS subunits.

It is found in the cytoplasm. It carries out the reaction N(2)-formyl-N(1)-(5-phospho-beta-D-ribosyl)glycinamide + L-glutamine + ATP + H2O = 2-formamido-N(1)-(5-O-phospho-beta-D-ribosyl)acetamidine + L-glutamate + ADP + phosphate + H(+). It functions in the pathway purine metabolism; IMP biosynthesis via de novo pathway; 5-amino-1-(5-phospho-D-ribosyl)imidazole from N(2)-formyl-N(1)-(5-phospho-D-ribosyl)glycinamide: step 1/2. Functionally, part of the phosphoribosylformylglycinamidine synthase complex involved in the purines biosynthetic pathway. Catalyzes the ATP-dependent conversion of formylglycinamide ribonucleotide (FGAR) and glutamine to yield formylglycinamidine ribonucleotide (FGAM) and glutamate. The FGAM synthase complex is composed of three subunits. PurQ produces an ammonia molecule by converting glutamine to glutamate. PurL transfers the ammonia molecule to FGAR to form FGAM in an ATP-dependent manner. PurS interacts with PurQ and PurL and is thought to assist in the transfer of the ammonia molecule from PurQ to PurL. This Chlorobium luteolum (strain DSM 273 / BCRC 81028 / 2530) (Pelodictyon luteolum) protein is Phosphoribosylformylglycinamidine synthase subunit PurL.